The chain runs to 152 residues: Protein-export protein SecB (152 aa).

This sequence belongs to the SecB family. As to quaternary structure, homotetramer, a dimer of dimers. One homotetramer interacts with 1 SecA dimer.

Its subcellular location is the cytoplasm. One of the proteins required for the normal export of preproteins out of the cell cytoplasm. It is a molecular chaperone that binds to a subset of precursor proteins, maintaining them in a translocation-competent state. It also specifically binds to its receptor SecA. This is Protein-export protein SecB from Rickettsia conorii (strain ATCC VR-613 / Malish 7).